The sequence spans 427 residues: Inward rectifier potassium channel 2 (427 aa).

Over 1–81 (MGSVRTNRYS…IFTTCVDIRW (81 aa)) the chain is Cytoplasmic. C76 carries the S-nitrosocysteine modification. The chain crosses the membrane as a helical span at residues 82–106 (RWMLVIFCLAFVLSWLFFGCVFWLI). Over 107 to 128 (ALLHGDLDASKESKACVSEVNS) the chain is Extracellular. The segment at residues 129-140 (FTAAFLFSIETQ) is an intramembrane region (helical; Pore-forming). The pore-forming intramembrane region spans 141 to 147 (TTIGYGF). The Selectivity filter signature appears at 142-147 (TIGYGF). Over 148–156 (RCVTDECPV) the chain is Extracellular. The chain crosses the membrane as a helical span at residues 157 to 178 (AVFMVVFQSIVGCIIDAFIIGA). The Cytoplasmic portion of the chain corresponds to 179–427 (VMAKMAKPKK…PRPLRRESEI (249 aa)). Residues 181 to 208 (AKMAKPKKRNETLVFSHNAVIAMRDGKL) are polyphosphoinositide (PIP2)-binding. A disordered region spans residues 384-427 (SKEEDDSENGVPESTSTDTPPDLDLHNQASVPLEPRPLRRESEI). Residues 425 to 427 (SEI) carry the PDZ-binding motif.

It belongs to the inward rectifier-type potassium channel (TC 1.A.2.1) family. KCNJ2 subfamily. Homotetramer. Homomultimeric and heteromultimeric association with KCNJ4/Kir2.3. Can form heteromeric channels with Kir2.6/KCNJ18. Associates, via its PDZ-recognition domain, with a complex containing LIN7A, LIN7B, LIN7C, DLG1, CASK and APBA1. Post-translationally, S-nitrosylation increases the open probability and inward rectifying currents.

It localises to the cell membrane. It is found in the sarcolemma. The protein resides in the T-tubule. It carries out the reaction K(+)(in) = K(+)(out). Activated by phosphatidylinositol 4,5 biphosphate (PtdIns(4,5)P2). Functionally, inward rectifier potassium channels are characterized by a greater tendency to allow potassium to flow into the cell rather than out of it. Their voltage dependence is regulated by the concentration of extracellular potassium; as external potassium is raised, the voltage range of the channel opening shifts to more positive voltages. The inward rectification is mainly due to the blockage of outward current by internal magnesium. Blocked by external barium or cesium. Probably participates in establishing action potential waveform and excitability of neuronal and muscle tissues. The protein is Inward rectifier potassium channel 2 (KCNJ2) of Canis lupus familiaris (Dog).